A 92-amino-acid polypeptide reads, in one-letter code: uncharacterized protein (92 aa).

Helical transmembrane passes span 1–21 (MEVLPLVSGICCILGGIGVIL), 29–49 (IIMLALLEIGMIGLIVSCYYL), and 51–71 (IAIVSSLCEPICTVILLLGYL).

Its subcellular location is the cell membrane. This is an uncharacterized protein from Methanocaldococcus jannaschii (strain ATCC 43067 / DSM 2661 / JAL-1 / JCM 10045 / NBRC 100440) (Methanococcus jannaschii).